Consider the following 106-residue polypeptide: UPF0145 protein Tpet_0165 (106 aa).

This sequence belongs to the UPF0145 family.

This is UPF0145 protein Tpet_0165 from Thermotoga petrophila (strain ATCC BAA-488 / DSM 13995 / JCM 10881 / RKU-1).